A 150-amino-acid polypeptide reads, in one-letter code: Macrodomain Ter protein (150 aa).

It belongs to the MatP family. Homodimer.

The protein resides in the cytoplasm. Required for spatial organization of the terminus region of the chromosome (Ter macrodomain) during the cell cycle. Prevents early segregation of duplicated Ter macrodomains during cell division. Binds specifically to matS, which is a 13 bp signature motif repeated within the Ter macrodomain. This is Macrodomain Ter protein from Escherichia coli O8 (strain IAI1).